Consider the following 39-residue polypeptide: Cytochrome b559 subunit beta (39 aa).

The chain crosses the membrane as a helical span at residues 14 to 30 (WLAIHGLAVPTVFFLGS). Heme is bound at residue H18.

Belongs to the PsbE/PsbF family. As to quaternary structure, heterodimer of an alpha subunit and a beta subunit. PSII is composed of 1 copy each of membrane proteins PsbA, PsbB, PsbC, PsbD, PsbE, PsbF, PsbH, PsbI, PsbJ, PsbK, PsbL, PsbM, PsbT, PsbX, PsbY, PsbZ, Psb30/Ycf12, at least 3 peripheral proteins of the oxygen-evolving complex and a large number of cofactors. It forms dimeric complexes. Requires heme b as cofactor.

The protein resides in the plastid. It is found in the chloroplast thylakoid membrane. Functionally, this b-type cytochrome is tightly associated with the reaction center of photosystem II (PSII). PSII is a light-driven water:plastoquinone oxidoreductase that uses light energy to abstract electrons from H(2)O, generating O(2) and a proton gradient subsequently used for ATP formation. It consists of a core antenna complex that captures photons, and an electron transfer chain that converts photonic excitation into a charge separation. This chain is Cytochrome b559 subunit beta, found in Psilotum nudum (Whisk fern).